The chain runs to 304 residues: N-acetyl-D-glucosamine kinase (304 aa).

Residues 4-11 and 133-140 contribute to the ATP site; these read GFDIGGTK and GFGGGLIF. Zn(2+)-binding residues include histidine 157, cysteine 178, cysteine 180, and cysteine 185.

This sequence belongs to the ROK (NagC/XylR) family. NagK subfamily.

The catalysed reaction is N-acetyl-D-glucosamine + ATP = N-acetyl-D-glucosamine 6-phosphate + ADP + H(+). It participates in cell wall biogenesis; peptidoglycan recycling. Its function is as follows. Catalyzes the phosphorylation of N-acetyl-D-glucosamine (GlcNAc) derived from cell-wall degradation, yielding GlcNAc-6-P. This chain is N-acetyl-D-glucosamine kinase, found in Mannheimia succiniciproducens (strain KCTC 0769BP / MBEL55E).